The chain runs to 195 residues: Transcription factor 15 (195 aa).

The segment at 44-65 is disordered; sequence LEAARRGPGPGSGRRASNGAGP. Low complexity predominate over residues 56–65; that stretch reads GRRASNGAGP. S60 is modified (phosphoserine). In terms of domain architecture, bHLH spans 70–122; that stretch reads RQRQAANARERDRTQSVNTAFTALRTLIPTEPVDRKLSKIETLRLASSYIAHL.

As to quaternary structure, heterodimer; efficient DNA binding requires dimerization with another bHLH protein, such as TCF3/E12. Interacts with MEOX2. As to expression, expressed in heart and skeletal muscle. Specifically expressed in a subpopulation of embryonic stem cells (ESCs), that are still undifferentiated but primed for ifferentiation. Expressed in hematopoietic stem cells (HSCs).

It localises to the nucleus. Early transcription factor that plays a key role in somitogenesis, paraxial mesoderm development and regulation of stem cell pluripotency. Essential for the mesenchymal to epithelial transition associated with somite formation. Required for somite morphogenesis, thereby regulating patterning of the axial skeleton and skeletal muscles. Required for proper localization of somite epithelium markers during the mesenchymal to epithelial transition. Also plays a key role in regulation of stem cell pluripotency. Promotes pluripotency exit of embryonic stem cells (ESCs) by priming ESCs for differentiation. Acts as a key regulator of self-renewal of hematopoietic stem cells (HSCs) by mediating HSCs quiescence and long-term self-renewal. Together with MEOX2, regulates transcription in heart endothelial cells to regulate fatty acid transport across heart endothelial cells. Acts by forming a heterodimer with another helix-loop-helix (bHLH) protein, such as TCF3/E12, that binds DNA on E-box motifs (5'-CANNTG-3') and activates transcription of target genes. The protein is Transcription factor 15 of Mus musculus (Mouse).